Here is a 133-residue protein sequence, read N- to C-terminus: Ubiquitin-like FUBI-ribosomal protein eS30 fusion protein (133 aa).

The 74-residue stretch at M1–G74 folds into the Ubiquitin-like domain. The disordered stretch occupies residues G84–M110. Basic residues predominate over residues E97–M110. N6-succinyllysine is present on K125.

This sequence in the N-terminal section; belongs to the ubiquitin family. It in the C-terminal section; belongs to the eukaryotic ribosomal protein eS30 family. As to quaternary structure, component of the 40S subunit of the ribosome. Post-translationally, FUBI is cleaved from ribosomal protein S30 by the deubiquitinase USP36 before the assembly of ribosomal protein S30 into pre-40S ribosomal particles. FUBI removal from ribosomal protein S30 is a crucial event for the final maturation of pre-40S particles.

It localises to the cytoplasm. The protein resides in the nucleus. In terms of biological role, may have pro-apoptotic activity. Its function is as follows. Component of the 40S subunit of the ribosome. Contributes to the assembly and function of 40S ribosomal subunits. The protein is Ubiquitin-like FUBI-ribosomal protein eS30 fusion protein of Homo sapiens (Human).